The sequence spans 72 residues: Conotoxin LvVIA (72 aa).

An N-terminal signal peptide occupies residues 1-17 (VLIIAVLFLTASELVTA). The propeptide occupies 18–41 (DYTRDKWQYRAASLRDAMRNFRDT). Intrachain disulfides connect C44-C58, C51-C63, and C57-C70.

Belongs to the conotoxin O1 superfamily. In terms of tissue distribution, expressed by the venom duct.

Its subcellular location is the secreted. The polypeptide is Conotoxin LvVIA (Conus lividus (Livid cone)).